We begin with the raw amino-acid sequence, 325 residues long: Taste receptor type 2 member 7 (325 aa).

Residues 1–9 (MADKVQTTL) are Extracellular-facing. Residues 10–30 (LFLAVGEFSVGILGNAFIGLV) traverse the membrane as a helical segment. The Cytoplasmic portion of the chain corresponds to 31-55 (NCMDWVKKRKIASIDLILTSLAISR). A helical membrane pass occupies residues 56–76 (ICLLCVILLDCFILVLYPDVY). Over 77–94 (ATGKEMRIIDFFWTLTNH) the chain is Extracellular. The helical transmembrane segment at 95–115 (LSIWFATCLSIYYFFRIANFF) threads the bilayer. Over 116–128 (HPLFLWMKWRIDR) the chain is Cytoplasmic. Residues 129–149 (VISWILLGCVVLSVFISLPAT) form a helical membrane-spanning segment. The Extracellular segment spans residues 150-187 (ENLNADFRFCVKAKRKTNLTWSCRVNKTQHASTKLFLN). 2 N-linked (GlcNAc...) asparagine glycosylation sites follow: Asn167 and Asn175. Residues 188–208 (LATLLPFCVCLMSFFLLILSL) form a helical membrane-spanning segment. Residues 209-235 (RRHIRRMQLSATGCRDPSTEAHVRALK) are Cytoplasmic-facing. A helical membrane pass occupies residues 236–256 (AVISFLLLFIAYYLSFLVATS). Residues 257 to 266 (SYFMPETELA) are Extracellular-facing. Residues 267–287 (VIFGESIALIYPSSHSFILIL) traverse the membrane as a helical segment. Residues 288–319 (GNNKLRHASLKVIWKVMSILKGRKFQQHKQIG) are Cytoplasmic-facing.

This sequence belongs to the G-protein coupled receptor T2R family.

It is found in the membrane. Gustducin-coupled receptor implicated in the perception of bitter compounds in the oral cavity and the gastrointestinal tract. Signals through PLCB2 and the calcium-regulated cation channel TRPM5. This is Taste receptor type 2 member 7 (TAS2R7) from Pan paniscus (Pygmy chimpanzee).